The chain runs to 246 residues: Heavy metal-associated isoprenylated plant protein 8 (246 aa).

A disordered region spans residues 1–31; sequence MGKNKQNGESDNKSEKKNQKNGDSSVDKSDK. Residues 35-99 form the HMA 1 domain; the sequence is CKEIVLKVYM…RVQKKFSRNA (65 aa). C46 and C49 together coordinate a metal cation. The interval 96–122 is disordered; it reads SRNAEMISPKHNPKQDQKEPQQKKESA. Basic and acidic residues predominate over residues 108-122; it reads PKQDQKEPQQKKESA. Residues 125 to 189 form the HMA 2 domain; sequence IKTAILRMNM…IKKKLGKHAE (65 aa). Positions 136 and 139 each coordinate a metal cation. The disordered stretch occupies residues 191–226; the sequence is LSQITEKGKDNNKKNNNKKEESDGNKIFSYPPQYSS. The span at 196–214 shows a compositional bias: basic and acidic residues; it reads EKGKDNNKKNNNKKEESDG. C243 carries the post-translational modification Cysteine methyl ester. C243 carries the S-farnesyl cysteine lipid modification. Positions 244 to 246 are cleaved as a propeptide — removed in mature form; that stretch reads SIM.

The protein belongs to the HIPP family.

Heavy-metal-binding protein. The protein is Heavy metal-associated isoprenylated plant protein 8 of Arabidopsis thaliana (Mouse-ear cress).